A 34-amino-acid chain; its full sequence is Mytilin-B (34 aa).

Disulfide bonds link cysteine 2/cysteine 27, cysteine 6/cysteine 29, cysteine 10/cysteine 31, and cysteine 15/cysteine 34.

The protein localises to the secreted. Functionally, has antibacterial and antiviral activity. The polypeptide is Mytilin-B (Mytilus edulis (Blue mussel)).